The following is a 291-amino-acid chain: MMRIILFLLTNLAVVCVFGFILSFTKIPPESISGLLIFSSIFGFSGSIISLLMSKWIALKSVNGQVIYQPSNNTEQWLIDTINSQSKKMGIKTPTIAIYHAFDMNAFATGAYKNSALIAVSTGLLENMSYDEAEAVLAHEINHISNGDMVTMTLVQGIVNTFVIFISRIIAQFASSILSENREDNNSNRNTWVYIICSTILELIFGIFASIITMWFSRHREFYADAGSAKLVGRKKMISALQKLKLSYEPQEKSNIIAFCINGKHSSFLNLFMSHPSLDKRIQALYNRDYM.

A run of 2 helical transmembrane segments spans residues 4–24 and 32–52; these read IILF…ILSF and ISGL…ISLL. His139 contributes to the Zn(2+) binding site. Residue Glu140 is part of the active site. Position 143 (His143) interacts with Zn(2+). The next 2 helical transmembrane spans lie at 158 to 178 and 192 to 212; these read IVNT…SSIL and WVYI…ASII. Residue Glu221 participates in Zn(2+) binding.

The protein belongs to the peptidase M48B family. It depends on Zn(2+) as a cofactor.

Its subcellular location is the cell membrane. The protein is Protease HtpX of Buchnera aphidicola subsp. Baizongia pistaciae (strain Bp).